Reading from the N-terminus, the 403-residue chain is Rhomboid-like protein 15 (403 aa).

Transmembrane regions (helical) follow at residues 22–42 (IPFLTSSVVVVCGVIYLICLL), 70–90 (AIIFHGSLLHVLFNMMALVPM), 103–123 (LLYLTVLLATTNAVLHLLIAS), 141–161 (AIGFSGILFSMIVIETSLSGV), and 176–196 (LYPWILLIVFQLLMTNVSLLG). The Nucleophile role is filled by Ser145. The Charge relay system role is filled by His197. A helical transmembrane segment spans residues 198-218 (LCGILSGFSYSYGLFNFLMPG). The tract at residues 282 to 316 (EASNQSSEDSRFPGRGRTLSTARDPTAPAGETDPN) is disordered. Residues 361–401 (AASEEQIQKLVAMGFDRTQVEVALAAADDDLTVAVEILMSQ) form the UBA domain.

This sequence belongs to the peptidase S54 family.

It localises to the membrane. In terms of biological role, probable rhomboid-type serine protease that catalyzes intramembrane proteolysis. May function in senescence. The chain is Rhomboid-like protein 15 from Arabidopsis thaliana (Mouse-ear cress).